Consider the following 81-residue polypeptide: MVKIRLKRMGAKKAPFYRIVVADSRSPRDGKFIEELGYYNPTTEPVTFKVDADKVNAWMKNGAQPSETVKKLLDKSGVTTK.

The protein belongs to the bacterial ribosomal protein bS16 family.

This chain is Small ribosomal subunit protein bS16, found in Clostridium acetobutylicum (strain ATCC 824 / DSM 792 / JCM 1419 / IAM 19013 / LMG 5710 / NBRC 13948 / NRRL B-527 / VKM B-1787 / 2291 / W).